We begin with the raw amino-acid sequence, 296 residues long: Polyamine aminopropyltransferase (296 aa).

Residues 5–238 (ELWYETLHAN…GIMTFAWATQ (234 aa)) form the PABS domain. Gln33 serves as a coordination point for S-methyl-5'-thioadenosine. Spermidine-binding residues include His64 and Asp88. Residues Glu108 and 140–141 (DG) contribute to the S-methyl-5'-thioadenosine site. Asp158 functions as the Proton acceptor in the catalytic mechanism. 158–161 (DCTD) provides a ligand contact to spermidine. Residue Pro165 participates in S-methyl-5'-thioadenosine binding.

Belongs to the spermidine/spermine synthase family. In terms of assembly, homodimer or homotetramer.

It is found in the cytoplasm. The enzyme catalyses S-adenosyl 3-(methylsulfanyl)propylamine + putrescine = S-methyl-5'-thioadenosine + spermidine + H(+). The protein operates within amine and polyamine biosynthesis; spermidine biosynthesis; spermidine from putrescine: step 1/1. Its function is as follows. Catalyzes the irreversible transfer of a propylamine group from the amino donor S-adenosylmethioninamine (decarboxy-AdoMet) to putrescine (1,4-diaminobutane) to yield spermidine. The chain is Polyamine aminopropyltransferase from Yersinia pseudotuberculosis serotype O:1b (strain IP 31758).